A 150-amino-acid polypeptide reads, in one-letter code: Large ribosomal subunit protein bL9 (150 aa).

Belongs to the bacterial ribosomal protein bL9 family.

Binds to the 23S rRNA. The sequence is that of Large ribosomal subunit protein bL9 from Buchnera aphidicola subsp. Acyrthosiphon pisum (strain 5A).